Consider the following 975-residue polypeptide: Ubiquitin C-terminal hydrolase 15 (975 aa).

8 residues coordinate Zn(2+): Cys-88, Cys-91, Cys-99, Cys-102, Cys-108, Cys-112, His-121, and Cys-125. The MYND-type zinc finger occupies 88–125; that stretch reads CATCHGPAKTRCSRCKSVRYCSGKCQIIHWRQGHKQTC. Positions 301-378 are disordered; it reads EGPYASAAES…STKTAVSTNS (78 aa). A compositionally biased stretch (polar residues) spans 309–322; it reads ESLQRSNSSGNVTG. A compositionally biased stretch (basic and acidic residues) spans 354–369; it reads YDGHEKNPHNKNEQRS. Residues 441-747 form the USP domain; it reads RGLFNCGNSC…GAYMLFYMRS (307 aa). Cys-450 serves as the catalytic Nucleophile. His-706 acts as the Proton acceptor in catalysis. Positions 764-783 are disordered; it reads PTCSKRHSSKSSKGSKQDLN.

The protein belongs to the peptidase C19 family. Highly expressed in young panicles. Expressed in roots, leaf blades, leaf sheaths and stems. Expressed at low levels in brown grains.

Its subcellular location is the cytoplasm. The protein resides in the nucleus. The enzyme catalyses Thiol-dependent hydrolysis of ester, thioester, amide, peptide and isopeptide bonds formed by the C-terminal Gly of ubiquitin (a 76-residue protein attached to proteins as an intracellular targeting signal).. In terms of biological role, recognizes and hydrolyzes the peptide bond at the C-terminal Gly of ubiquitin. Involved in the processing of poly-ubiquitin precursors as well as that of ubiquitinated proteins. Involved in the regulation of grain size. Acts as positive regulator of grain width and size by influencing cell proliferation. Functions partially antagonistically with GW2 in the regulation of grain width. Possesses deubiquitinating enzyme activity in vitro. The chain is Ubiquitin C-terminal hydrolase 15 from Oryza sativa subsp. japonica (Rice).